The chain runs to 500 residues: L-arabinose isomerase (500 aa).

4 residues coordinate Mn(2+): Glu306, Glu333, His350, and His450.

The protein belongs to the arabinose isomerase family. In terms of assembly, homohexamer. Requires Mn(2+) as cofactor.

The enzyme catalyses beta-L-arabinopyranose = L-ribulose. It functions in the pathway carbohydrate degradation; L-arabinose degradation via L-ribulose; D-xylulose 5-phosphate from L-arabinose (bacterial route): step 1/3. Its function is as follows. Catalyzes the conversion of L-arabinose to L-ribulose. This is L-arabinose isomerase from Salmonella typhi.